The primary structure comprises 351 residues: Small ribosomal subunit biogenesis GTPase RsgA (351 aa).

Residues 1-12 (MAKHKLSKGQQR) are compositionally biased toward basic residues. The disordered stretch occupies residues 1–37 (MAKHKLSKGQQRRVRENHQRRLKKQDNKPEMDDNQLG). Over residues 13-31 (RVRENHQRRLKKQDNKPEM) the composition is skewed to basic and acidic residues. A CP-type G domain is found at 112 to 274 (YYDGIKPIAA…VIDSPGVREF (163 aa)). Residues 160-163 (NKID) and 214-222 (GQSGVGKSS) each bind GTP. Zn(2+) is bound by residues Cys298, Cys303, His305, and Cys311.

Belongs to the TRAFAC class YlqF/YawG GTPase family. RsgA subfamily. Monomer. Associates with 30S ribosomal subunit, binds 16S rRNA. Zn(2+) serves as cofactor.

It is found in the cytoplasm. Its function is as follows. One of several proteins that assist in the late maturation steps of the functional core of the 30S ribosomal subunit. Helps release RbfA from mature subunits. May play a role in the assembly of ribosomal proteins into the subunit. Circularly permuted GTPase that catalyzes slow GTP hydrolysis, GTPase activity is stimulated by the 30S ribosomal subunit. In Photorhabdus laumondii subsp. laumondii (strain DSM 15139 / CIP 105565 / TT01) (Photorhabdus luminescens subsp. laumondii), this protein is Small ribosomal subunit biogenesis GTPase RsgA.